The chain runs to 316 residues: Long form salivary protein D7L1 (316 aa).

Residues 1 to 23 (MSHTRAVVLAVACLCLILVQVEG) form the signal peptide. Disulfide bonds link Cys40/Cys76, Cys72/Cys131, Cys181/Cys214, and Cys255/Cys266.

This sequence belongs to the PBP/GOBP family.

The protein localises to the secreted. Modulates blood feeding of female mosquitoes on vertebrate species by binding and sequestering different mediators involved in the host response, such as biogenic amines and eicosanoids. Binds serotonin, tryptamine, histamine, leukotriene C4, leukotriene D4 and leukotriene E4. Does not bind octopamine, dopamine, noradrenaline, adrenaline and prostaglandin PGF2alpha. In Anopheles atroparvus (European mosquito), this protein is Long form salivary protein D7L1.